A 2367-amino-acid chain; its full sequence is Toxin B (2367 aa).

The interval 2–91 is four-helical bundle; that stretch reads SLVNRKQLEK…EILELKNSNL (90 aa). The GT44 domain occupies 96 to 469; sequence KNLHFIWIGG…YPEANTTITL (374 aa). Positions 96-469 are glucosyltransferase region; it reads KNLHFIWIGG…YPEANTTITL (374 aa). UDP-alpha-D-glucose contacts are provided by residues 101–103, Asn-139, 269–273, and 286–288; these read IWI, SDILR, and DVD. Residues Asp-286, Asp-288, and Glu-516 each contribute to the Mg(2+) site. Residue 519 to 521 participates in UDP-alpha-D-glucose binding; the sequence is SLW. The segment at 545–800 is autoprocessing region; sequence GEDDNLDFSQ…KSKNLPELST (256 aa). The Zn(2+) site is built by Glu-546 and Asp-547. The 208-residue stretch at 568 to 775 folds into the Peptidase C80 domain; that stretch reads SSSTKSSERG…EESIIKDISS (208 aa). 1D-myo-inositol hexakisphosphate-binding residues include Tyr-578, Lys-601, and Lys-648. His-654 lines the Zn(2+) pocket. His-654 serves as the catalytic For protease activity. Cys-699 (nucleophile; for protease activity) is an active-site residue. Residue His-758 participates in Zn(2+) binding. 1D-myo-inositol hexakisphosphate contacts are provided by Lys-765, Lys-776, and Lys-793. The segment at 801–1501 is translocation region; that stretch reads LLQEIRNNSN…VVLIIKVYMD (701 aa). 3 interaction with host frizzled receptors FZD1, FZD2 and FZD7 regions span residues 1434–1439, 1487–1512, and 1598–1600; these read LKTLMA, SELSDVVLIIKVYMDNSKPPFGYYSN, and SLK. Cell wall-binding repeat units lie at residues 1833–1852, 1854–1873, 1876–1895, 1926–1945, 1946–1965, 1967–1986, 1987–2006, 2007–2026, 2057–2076, 2077–2097, 2099–2118, 2119–2138, 2139–2158, 2209–2231, 2233–2252, 2253–2272, 2273–2292, 2323–2342, and 2343–2362; these read VSGLVYINDSLYYFKPPIKN, ITGFTTIGDDKYYFNPDNGG, SVGETIIDGKNYYFSQNGVL, FTGKLIIDENVYYFGDNYRA, AIEWQTLDDEVYYFSTDTGR, FKGLNQIGDDKFYFNSDGIM, QKGFVNINDKTFYFDDSGVM, KSGYTEIDGRYFYFAENGEM, YSGILNFNNKIYYFDDSFTA, VVGWKDLEDGSKYYFDENTAE, SIGISIINDGKYYFNDSGIM, QIGFVTINNEVFYFSDSGIV, ESGMQNIDDNYFYISENGLV, ETGWIYDSENESDKYYFDPEAKK, YKGINVIDDIKYYFDENGIM, RTGLITFEDNHYYFNEDGEM, QYGYLNIEDKMFYFSEDGIM, YTGWLDLDEKRYYFTDEYIA, and ATGSVIIDGEEYYFDPDTAQ. Positions 1835–2367 are receptor-binding (CROPS) region; the sequence is GLVYINDSLY…PDTAQLVISE (533 aa).

The protein belongs to the clostridial glucosylating toxin (LCGT) family. As to quaternary structure, interacts with host FZD1. Interacts with host FZD2; interaction promotes toxin entry into host cell and occupies the binding site for Wnt-adducted palmitoleate in FZD2, leading to prevent Wnt-binding and downstream Wnt signaling. Interacts with host FZD7. Interacts with host CSPG4. Interacts with host NECTIN3/PVRL3. Zn(2+) is required as a cofactor. Mn(2+) serves as cofactor. It depends on Mg(2+) as a cofactor. Undergoes autocatalytic cleavage to release the N-terminal part (Glucosyltransferase TcdB), which constitutes the active part of the toxin, in the host cytosol. 1D-myo-inositol hexakisphosphate-binding (InsP6) activates the peptidase C80 domain and promotes autoprocessing.

It is found in the secreted. The protein resides in the host endosome membrane. The protein localises to the host cytoplasm. It localises to the host cytosol. Its subcellular location is the host cell membrane. It carries out the reaction L-threonyl-[protein] + UDP-alpha-D-glucose = 3-O-(alpha-D-glucosyl)-L-threonyl-[protein] + UDP + H(+). With respect to regulation, protease activity is activated upon binding to 1D-myo-inositol hexakisphosphate (InsP6), which induces conformational reorganization. In terms of biological role, precursor of a cytotoxin that targets and disrupts the colonic epithelium, inducing the host inflammatory and innate immune responses and resulting in diarrhea and pseudomembranous colitis. TcdB constitutes the main toxin that mediates the pathology of C.difficile infection, an opportunistic pathogen that colonizes the colon when the normal gut microbiome is disrupted. Compared to TcdA, TcdB is more virulent and more important for inducing the host inflammatory and innate immune responses. This form constitutes the precursor of the toxin: it enters into host cells and mediates autoprocessing to release the active toxin (Glucosyltransferase TcdB) into the host cytosol. Targets colonic epithelia by binding to the frizzled receptors FZD1, FZD2 and FZD7, and enters host cells via clathrin-mediated endocytosis. Frizzled receptors constitute the major host receptors in the colonic epithelium, but other receptors, such as CSPG4 or NECTIN3/PVRL3, have been identified. Binding to carbohydrates and sulfated glycosaminoglycans on host cell surface also contribute to entry into cells. Once entered into host cells, acidification in the endosome promotes the membrane insertion of the translocation region and formation of a pore, leading to translocation of the GT44 and peptidase C80 domains across the endosomal membrane. This activates the peptidase C80 domain and autocatalytic processing, releasing the N-terminal part (Glucosyltransferase TcdB), which constitutes the active part of the toxin, in the cytosol. Active form of the toxin, which is released into the host cytosol following autoprocessing and inactivates small GTPases. Acts by mediating monoglucosylation of small GTPases of the Rho family (Rac1, RhoA, RhoB, RhoC, RhoG and Cdc42) in host cells at the conserved threonine residue located in the switch I region ('Thr-37/35'), using UDP-alpha-D-glucose as the sugar donor. Monoglucosylation of host small GTPases completely prevents the recognition of the downstream effector, blocking the GTPases in their inactive form, leading to actin cytoskeleton disruption and cell death, resulting in the loss of colonic epithelial barrier function. In Clostridioides difficile (Peptoclostridium difficile), this protein is Toxin B.